Reading from the N-terminus, the 327-residue chain is Lipid phosphate phosphatase 1 (327 aa).

6 consecutive transmembrane segments (helical) span residues 51-71 (WIIL…SPFY), 93-113 (IWSV…CFYL), 118-138 (VYDL…TGVI), 187-207 (FPSG…LYLS), 217-237 (GHVA…LVGI), and 244-264 (WHHW…AAFC).

Belongs to the PA-phosphatase related phosphoesterase family. In terms of tissue distribution, strongly expressed in leaves, moderately in roots, weakly in floral hamps and flower buds, and not detected in adult flowers and seedpods.

The protein resides in the membrane. Its activity is regulated as follows. PA phosphatase activity inhibited by N-ethylmaleimide with an IC(50) value of 10 mM. Its function is as follows. Plays a general role in cellular responses to stress, may be by attenuating the signal produced by phospholipases. Exhibits both diacylglycerol pyrophosphate (DGPP) phosphatase and phosphatidate (PA) phosphatase activities. Substrate preference is diacylglycerol pyrophosphate &gt; phosphatidate. The sequence is that of Lipid phosphate phosphatase 1 (LPP1) from Arabidopsis thaliana (Mouse-ear cress).